The following is a 157-amino-acid chain: Small heat shock protein ibp (157 aa).

Residues 35–148 (EKPISDTPTY…KPKKISINVP (114 aa)) form the sHSP domain.

The protein belongs to the small heat shock protein (HSP20) family.

This Buchnera aphidicola subsp. Acyrthosiphon pisum (strain APS) (Acyrthosiphon pisum symbiotic bacterium) protein is Small heat shock protein ibp (ibp).